The following is a 221-amino-acid chain: DNA mismatch repair protein MutH (221 aa).

Belongs to the MutH family.

It is found in the cytoplasm. Sequence-specific endonuclease that cleaves unmethylated GATC sequences. It is involved in DNA mismatch repair. This Vibrio cholerae serotype O1 (strain ATCC 39541 / Classical Ogawa 395 / O395) protein is DNA mismatch repair protein MutH.